The sequence spans 259 residues: MHATGLAAPAGTPRLRKWPSKRRVPVSQPGMADPHQFFDDTSSAPSRGYGGQPSPGSLGYPTSSSEAAFLAAPMSNMAMAYGSSLAAQGKELVDKNIDRFIPVSKLKYYFAVDTVYVGKKLGLLVFPYLHQDWEVQYQQDTPVAPRFDINAPDLYIPAMAFITYILVAGLALGTQDRMIGGVLTGLLFGKIGYYLVLAWCCVSIFVFMIRTLRLKILAQAAAEGVPVRGARNQLRMYLTMAVAAAQPVLMYWLTFHLVR.

M1 carries the N-acetylmethionine modification. The disordered stretch occupies residues 1 to 61 (MHATGLAAPA…QPSPGSLGYP (61 aa)). Residues 9-153 (PAGTPRLRKW…APRFDINAPD (145 aa)) lie on the Cytoplasmic side of the membrane. At T12 the chain carries Phosphothreonine. The segment covering 14-24 (RLRKWPSKRRV) has biased composition (basic residues). At S64 the chain carries Phosphoserine. A helical transmembrane segment spans residues 154-174 (LYIPAMAFITYILVAGLALGT). Residues 175 to 186 (QDRMIGGVLTGL) lie on the Extracellular side of the membrane. A helical transmembrane segment spans residues 187–207 (LFGKIGYYLVLAWCCVSIFVF). Topologically, residues 208–237 (MIRTLRLKILAQAAAEGVPVRGARNQLRMY) are cytoplasmic. A helical membrane pass occupies residues 238-258 (LTMAVAAAQPVLMYWLTFHLV). A topological domain (extracellular) is located at residue R259.

Belongs to the YIF1 family. As to quaternary structure, interacts with HTR1A (via C-terminus). Interacts with ABCB9 (via TMD0); this interaction allows (but is not essential) the ER-to-Golgi trafficking and strongly depends on a salt bridge within TMD0. As to expression, highly expressed in brain. Expressed in heart, kidney, and lung and lower levels in spleen, muscle, and intestine (at protein level). Expressed in serotoninergic neurons (at protein level).

The protein localises to the endoplasmic reticulum membrane. It is found in the golgi apparatus membrane. It localises to the endoplasmic reticulum-Golgi intermediate compartment membrane. In terms of biological role, functions in endoplasmic reticulum to Golgi vesicle-mediated transport and regulates the proper organization of the endoplasmic reticulum and the Golgi. Plays a key role in targeting to neuronal dendrites receptors such as HTR1A. Plays also a role in primary cilium and sperm flagellum assembly probably through protein transport to these compartments. The protein is Protein YIF1B of Rattus norvegicus (Rat).